A 517-amino-acid chain; its full sequence is Salicyloyl-CoA 5-hydroxylase (517 aa).

The protein belongs to the aromatic-ring hydroxylase family. KMO subfamily.

The catalysed reaction is 2-hydroxybenzoyl-CoA + NADH + O2 + H(+) = 2,5-dihydroxybenzoyl-CoA + NAD(+) + H2O. Involved in the degradation of salicylate via a pathway involving coenzyme A derivative. Catalyzes the aromatic hydroxylation of salicylyl-CoA to yield gentisyl-CoA. This is Salicyloyl-CoA 5-hydroxylase from Streptomyces sp.